Reading from the N-terminus, the 348-residue chain is Mannonate dehydratase (348 aa).

This sequence belongs to the mannonate dehydratase family. Fe(2+) serves as cofactor. The cofactor is Mn(2+).

It carries out the reaction D-mannonate = 2-dehydro-3-deoxy-D-gluconate + H2O. It functions in the pathway carbohydrate metabolism; pentose and glucuronate interconversion. Functionally, catalyzes the dehydration of D-mannonate. The polypeptide is Mannonate dehydratase (Streptococcus uberis (strain ATCC BAA-854 / 0140J)).